Consider the following 427-residue polypeptide: Protein TolB homolog (427 aa).

An N-terminal signal peptide occupies residues 1 to 20 (MLRRIFVSTFLVFGIVSLYA).

The protein belongs to the TolB family.

It localises to the periplasm. The protein is Protein TolB homolog of Chlamydia caviae (strain ATCC VR-813 / DSM 19441 / 03DC25 / GPIC) (Chlamydophila caviae).